Consider the following 172-residue polypeptide: Peptide methionine sulfoxide reductase MsrA (172 aa).

C12 is an active-site residue.

It belongs to the MsrA Met sulfoxide reductase family.

It catalyses the reaction L-methionyl-[protein] + [thioredoxin]-disulfide + H2O = L-methionyl-(S)-S-oxide-[protein] + [thioredoxin]-dithiol. It carries out the reaction [thioredoxin]-disulfide + L-methionine + H2O = L-methionine (S)-S-oxide + [thioredoxin]-dithiol. Has an important function as a repair enzyme for proteins that have been inactivated by oxidation. Catalyzes the reversible oxidation-reduction of methionine sulfoxide in proteins to methionine. In Ligilactobacillus salivarius (strain UCC118) (Lactobacillus salivarius), this protein is Peptide methionine sulfoxide reductase MsrA.